A 73-amino-acid chain; its full sequence is Sec-independent protein translocase protein TatA (73 aa).

A helical transmembrane segment spans residues 1–21 (MGSFSIWHWLIVLVIVMLVFG). Residues 43 to 73 (MKEGDDKAAPAKELRDSTTIDVDAKEKTRQQ) are disordered.

The protein belongs to the TatA/E family. In terms of assembly, the Tat system comprises two distinct complexes: a TatABC complex, containing multiple copies of TatA, TatB and TatC subunits, and a separate TatA complex, containing only TatA subunits. Substrates initially bind to the TatABC complex, which probably triggers association of the separate TatA complex to form the active translocon.

Its subcellular location is the cell inner membrane. Functionally, part of the twin-arginine translocation (Tat) system that transports large folded proteins containing a characteristic twin-arginine motif in their signal peptide across membranes. TatA could form the protein-conducting channel of the Tat system. The chain is Sec-independent protein translocase protein TatA from Cupriavidus pinatubonensis (strain JMP 134 / LMG 1197) (Cupriavidus necator (strain JMP 134)).